The primary structure comprises 145 residues: Probable DNA-directed RNA polymerases I and III subunit RPAC2 (145 aa).

A disordered region spans residues 1–52 (MGKKSEKKVVEETMEVDEQPAVEPEAVPEEEPEVEDEDLNVPKKKKMEILDP). Acidic residues predominate over residues 12 to 39 (ETMEVDEQPAVEPEAVPEEEPEVEDEDL).

Belongs to the archaeal Rpo11/eukaryotic RPB11/RPC19 RNA polymerase subunit family. In terms of assembly, component of the RNA polymerase I (Pol I) and RNA polymerase III (Pol III) complexes consisting of at least 13 and 17 subunits, respectively.

The protein resides in the nucleus. DNA-dependent RNA polymerase catalyzes the transcription of DNA into RNA using the four ribonucleoside triphosphates as substrates. Common core component of RNA polymerases I and III which synthesize ribosomal RNA precursors and small RNAs, such as 5S rRNA and tRNAs, respectively. In Caenorhabditis briggsae, this protein is Probable DNA-directed RNA polymerases I and III subunit RPAC2 (rpac-19).